The primary structure comprises 447 residues: Cysteine--tRNA ligase (447 aa).

Residue C28 coordinates Zn(2+). A 'HIGH' region motif is present at residues 30–40; the sequence is PTVYNYIHIGN. Residues C211, H236, and E240 each contribute to the Zn(2+) site. The short motif at 268-272 is the 'KMSKS' region element; that stretch reads KMSKS. K271 provides a ligand contact to ATP.

This sequence belongs to the class-I aminoacyl-tRNA synthetase family. Monomer. It depends on Zn(2+) as a cofactor.

It localises to the cytoplasm. The catalysed reaction is tRNA(Cys) + L-cysteine + ATP = L-cysteinyl-tRNA(Cys) + AMP + diphosphate. The chain is Cysteine--tRNA ligase from Streptococcus pyogenes serotype M18 (strain MGAS8232).